Consider the following 407-residue polypeptide: Guanine nucleotide-binding protein alpha-1 subunit (407 aa).

The N-myristoyl glycine moiety is linked to residue Gly-2. Cys-3 carries S-palmitoyl cysteine lipidation. The G-alpha domain occupies 73 to 407 (NDIKVLLLGA…MSNNLQSLMF (335 aa)). The tract at residues 76–89 (KVLLLGAGDSGKTT) is G1 motif. GTP-binding residues include Asp-84, Ser-85, Gly-86, Lys-87, Thr-88, Thr-89, Asp-190, Leu-215, Thr-221, Gly-243, Asn-309, Lys-310, Asp-312, and Ala-380. Position 88 (Thr-88) interacts with Mg(2+). The tract at residues 213 to 221 (DILHCRIKT) is G2 motif. Residue Thr-221 coordinates Mg(2+). Residues 236 to 245 (YRFFDVGGQR) are G3 motif. Residues 305–312 (ILFLNKLD) are G4 motif. The G5 motif stretch occupies residues 378-383 (TTATDT).

This sequence belongs to the G-alpha family. G(q) subfamily. As to quaternary structure, g proteins are composed of 3 units; alpha, beta and gamma. The alpha chain contains the guanine nucleotide binding site. Mg(2+) serves as cofactor.

Its function is as follows. Implicated in the mating and sporulation pathway. Probably coupled to mating-factor receptors. May act in concert with Ras1. The protein is Guanine nucleotide-binding protein alpha-1 subunit (gpa1) of Schizosaccharomyces pombe (strain 972 / ATCC 24843) (Fission yeast).